We begin with the raw amino-acid sequence, 148 residues long: Gastrin-releasing peptide (148 aa).

A signal peptide spans 1–23; that stretch reads MRGRELPLVLLALVLCLAPRGRA. The residue at position 50 (M50) is a Methionine amide. Positions 54–148 are excised as a propeptide; it reads STGESSSVSE…EGRNPQLNQQ (95 aa). The segment at 89–148 is disordered; sequence EAKENRNHQPPQPKALGNQQPSWDSEDSSNFKDVGSKGKVGRLSAPGSQREGRNPQLNQQ.

The protein belongs to the bombesin/neuromedin-B/ranatensin family.

Its subcellular location is the secreted. The protein resides in the cytoplasmic vesicle. The protein localises to the secretory vesicle lumen. It is found in the cell projection. It localises to the neuron projection. Its function is as follows. Stimulates the release of gastrin and other gastrointestinal hormones. Contributes to the perception of prurient stimuli and to the transmission of itch signals in the spinal cord that promote scratching behavior. Contributes primarily to nonhistaminergic itch sensation. In one study, shown to act in the amygdala as part of an inhibitory network which inhibits memory specifically related to learned fear. In another study, shown to act on vasoactive intestinal peptide (VIP)-expressing cells in the auditory cortex, most likely via extrasynaptic diffusion from local and long-range sources, to mediate disinhibition of glutamatergic cells via VIP cell-specific GRPR signaling which leads to enhanced auditory fear memories. Contributes to the regulation of food intake. Inhibits voltage-gated sodium channels but enhances voltage-gated potassium channels in hippocampal neurons. Induces sighing by acting directly on the pre-Botzinger complex, a cluster of several thousand neurons in the ventrolateral medulla responsible for inspiration during respiratory activity. Functionally, induces an itch response through activation of receptors present on mast cells, triggering mast cell degranulation. The protein is Gastrin-releasing peptide (GRP) of Homo sapiens (Human).